The sequence spans 696 residues: MEASVILPILKKKLAFLSGGKDRRSGLILTIPLCLEQTSMDELSVTLDYLLSIPSEKCKARGFTVIVDGRKSQWNVVKTVVLMLQNVVPAEVSLVCVVKPDEFWDKKVTHFCFWKEKDRLGFEVILVSANKLTRYIEPCQLTEDFGGSLTYDHMDWLNKRLVFEKFTKESTSLLDELALINNGSDKGNEQEKERSVDLNFLPSVDPETVLQTGHELLSELQQRRFNGSDGGVSWSPMDDELLAQPQVMKLLDSLREQYTRYQEVCRQRSKRTQLEEIQQKVMQVVNWLEGPGSEQLRAQWGIGDSIRASQALQQKHEEIESQHSEWFAVYVELNQQIAALLNAGDEEDLVELKSLQQQLSDVCYRQASQLEFRQNLLQAALEFHGVAQDLSQQLDGLLGMLCVDVAPADGASIQQTLKLLEEKLKSVDVGLQGLREKGQGLLDQISNQASWAYGKDVTIENKENVDHIQGVMEDMQLRKQRCEDMVDVRRLKMLQMVQLFKCEEDASQAVEWLSELLDALLKTHIRLGDDAQETKVLLEKHRKFVDVAQSTYDYGRQLLQATVVLCQSLRCTSRSSGDTLPRLNRVWKQFTVASEERVHRLEMAIAFHSNAEKILQDCPEEPEAMNDEEQFEEIEAIGKSLLDRLTIPVVYPDGTEQYFGSPSDMASTAEHIRDRMKLVSLKRQQLRHPELVTTES.

A CRAL-TRIO domain is found at Met-1–His-153. 3 Spectrin repeats span residues Glu-275–Gln-378, Leu-381–Leu-494, and Phe-500–Glu-602.

Belongs to the SOLO family. Interacts (via the spectrin 1 repeat) with TRPC4 and TRPC5 (via CIRB domain). Interacts with CTNNB1.

Functionally, may act as the primary docking protein directing membrane turnover and assembly of the transient receptor potential channels TRPC4 and TRPC5. Binds phospholipids such as phosphatidylinositol monophosphates, phosphatidylinositol diphosphates (PIP2s) and phosphatidic acid, but not less polar lipids including phosphatidylcholine, phosphatidylserine, and phosphatidylinositol. The binding to PIP2s is calcium dependent. Might be involved in the plasma membrane localization of CTNNB1. This Mus musculus (Mouse) protein is SEC14 domain and spectrin repeat-containing protein 1 (Sestd1).